A 188-amino-acid polypeptide reads, in one-letter code: GTP cyclohydrolase 1 (188 aa).

Zn(2+) contacts are provided by Cys75, His78, and Cys146.

This sequence belongs to the GTP cyclohydrolase I family. In terms of assembly, toroid-shaped homodecamer, composed of two pentamers of five dimers.

The enzyme catalyses GTP + H2O = 7,8-dihydroneopterin 3'-triphosphate + formate + H(+). It participates in cofactor biosynthesis; 7,8-dihydroneopterin triphosphate biosynthesis; 7,8-dihydroneopterin triphosphate from GTP: step 1/1. The protein is GTP cyclohydrolase 1 of Hahella chejuensis (strain KCTC 2396).